A 363-amino-acid polypeptide reads, in one-letter code: Uptake hydrogenase small subunit (363 aa).

Residues 1–43 (MIETFYEVMRRQGISRRSFLKYCSLTATSLGLSPVFVPKIVHA) constitute a signal peptide (tat-type signal). Cysteine 60, cysteine 63, cysteine 158, cysteine 192, histidine 230, cysteine 233, cysteine 258, and cysteine 264 together coordinate [4Fe-4S] cluster. Positions 273, 292, and 295 each coordinate [3Fe-4S] cluster.

This sequence belongs to the [NiFe]/[NiFeSe] hydrogenase small subunit family. As to quaternary structure, heterodimer of a large and a small subunit. The cofactor is [4Fe-4S] cluster. [3Fe-4S] cluster is required as a cofactor. Predicted to be exported by the Tat system. The position of the signal peptide cleavage has not been experimentally proven.

The protein resides in the cell membrane. It catalyses the reaction H2 + A = AH2. Functionally, this enzyme recycles the H(2) produced by nitrogenase to increase the production of ATP and to protect nitrogenase against inhibition or damage by O(2) under carbon- or phosphate-limited conditions. The sequence is that of Uptake hydrogenase small subunit (hupS) from Alcaligenes hydrogenophilus.